The sequence spans 863 residues: Leucine--tRNA ligase (863 aa).

Positions 40-51 (PYPSGAGLHVGH) match the 'HIGH' region motif. The 'KMSKS' region motif lies at 635 to 639 (KMSKS). Residue lysine 638 participates in ATP binding.

Belongs to the class-I aminoacyl-tRNA synthetase family.

The protein resides in the cytoplasm. The catalysed reaction is tRNA(Leu) + L-leucine + ATP = L-leucyl-tRNA(Leu) + AMP + diphosphate. This chain is Leucine--tRNA ligase, found in Leptospira interrogans serogroup Icterohaemorrhagiae serovar copenhageni (strain Fiocruz L1-130).